Here is a 587-residue protein sequence, read N- to C-terminus: Probable terpene synthase 12 (587 aa).

Asp338, Asp342, and Glu489 together coordinate Mg(2+). The DDXXD motif signature appears at 338–342 (DDVYD).

The protein belongs to the terpene synthase family. The cofactor is Mg(2+).

Functionally, probable sesquiterpene synthase. This chain is Probable terpene synthase 12 (TPS12), found in Ricinus communis (Castor bean).